A 170-amino-acid chain; its full sequence is Glycine cleavage system H protein, mitochondrial (170 aa).

A mitochondrion-targeting transit peptide spans 1-47; the sequence is MLRTTRLWTTRMPTVSKLFLRNSSGNALNKNKLPFLYSSQGPQAVRY. Positions 61–143 constitute a Lipoyl-binding domain; that stretch reads TAFVGITKYA…MGDGWLVKMK (83 aa). Position 102 is an N6-lipoyllysine (K102).

It belongs to the GcvH family. Component of the glycine decarboxylase complex (GDC), which is composed of four proteins: P, T, L and H. The cofactor is (R)-lipoate.

The protein localises to the mitochondrion. The glycine cleavage system (glycine decarboxylase complex) catalyzes the degradation of glycine. The H protein shuttles the methylamine group of glycine from the P protein to the T protein. The polypeptide is Glycine cleavage system H protein, mitochondrial (GCV3) (Saccharomyces cerevisiae (strain ATCC 204508 / S288c) (Baker's yeast)).